The following is an 822-amino-acid chain: Adhesion G protein-coupled receptor E2 (822 aa).

The signal sequence occupies residues 1-18 (MGGRVFLAFCVWLTLLGA). Residues 19 to 530 (ETQDSRDCAR…DVQEEDPVLT (512 aa)) lie on the Extracellular side of the membrane. Residues 22–63 (DSRDCARWCPENSSCVNATACRCNPGFSSSSEIFTSPTEICD) form the EGF-like 1 domain. 5 disulfide bridges follow: Cys26-Cys36, Cys30-Cys42, Cys44-Cys62, Cys68-Cys82, and Cys76-Cys91. Residues Asn33 and Asn38 are each glycosylated (N-linked (GlcNAc...) asparagine). The EGF-like 1; calcium-binding domain maps to 64–103 (DINECVPPSKVSCGKSSDCRNTEGSYDCVCNPGYELVSGA). The N-linked (GlcNAc...) asparagine glycan is linked to Asn108. Residues 116-159 (DVDECQQNPRLCKSYGTCVNTLGSFTCQCLPGFKFKPEDPKLCT) enclose the EGF-like 2; calcium-binding domain. 5 disulfide bridges follow: Cys120–Cys133, Cys127–Cys142, Cys144–Cys158, Cys164–Cys177, and Cys171–Cys186. The EGF-like 3; calcium-binding domain occupies 160–198 (DVNECTSGQNPCHSSTHCLNNVGSYQCRCRPGWQPIPGS). Asn203, Asn222, Asn351, Asn371, Asn427, Asn449, and Asn453 each carry an N-linked (GlcNAc...) asparagine glycan. The EGF-like 4; calcium-binding domain occupies 209-247 (DVDECSSGLHQCDNSTVCFNTVGSYTCRCRPGWEPKHGI). 2 cysteine pairs are disulfide-bonded: Cys213/Cys226 and Cys220/Cys235. In terms of domain architecture, GAIN-B spans 351-523 (NFSYPAGTEF…AVLMAPYDVQ (173 aa)). Cystine bridges form between Cys475–Cys505 and Cys493–Cys507. A GPS region spans residues 475-523 (CVFWEHGQNGCGHWATTGCSTMDTRDTSTICRCTHLSSFAVLMAPYDVQ). The helical transmembrane segment at 531 to 551 (VITYMGLSLSLLCLLLAALTF) threads the bilayer. At 552 to 562 (LLCKAIQNIST) the chain is on the cytoplasmic side. A helical membrane pass occupies residues 563-583 (SLHLQLSLCLLLAHLLFLVAI). Topologically, residues 584-589 (DRTEHE) are extracellular. A helical membrane pass occupies residues 590–610 (VLCAIIASALHYLYLAAFTWM). The Cytoplasmic portion of the chain corresponds to 611-637 (LLEALYLFLTARNLMVVNYSSINRFTK). A helical membrane pass occupies residues 638-658 (KLMFPVAYGVPAVTVAISAAS). At 659–676 (RPHLYGTPSRCWLQPEKG) the chain is on the extracellular side. Residues 677 to 697 (FIWGFLGPVCAIFSVNLALLL) form a helical membrane-spanning segment. Topologically, residues 698-728 (VTLWILKNRLSSLNNEVSTLQNTRMLAFKAT) are cytoplasmic. A helical transmembrane segment spans residues 729–749 (AQLFILGCTWCLGILQVGPAA). Over 750–753 (RVMA) the chain is Extracellular. The helical transmembrane segment at 754 to 774 (YLFTIINSLQGVFIFLVYCLL) threads the bilayer. The Cytoplasmic segment spans residues 775-822 (SQQVREQYRKWSKGFRKLRTESEMHTLSSSAKRDTPKPSTPGLLGLQS). The tract at residues 797–822 (EMHTLSSSAKRDTPKPSTPGLLGLQS) is disordered.

It belongs to the G-protein coupled receptor 2 family. Adhesion G-protein coupled receptor (ADGR) subfamily. Forms a heterodimer, consisting of a large extracellular region non-covalently linked to a seven-transmembrane moiety. Interacts with chondroitin sulfate; the interaction with chondroitin sulfate is calcium-dependent. Interacts with CD55. In terms of processing, autoproteolytically cleaved into 2 subunits, an extracellular alpha subunit and a seven-transmembrane beta subunit.

The protein resides in the cell membrane. The protein localises to the cell projection. Its subcellular location is the ruffle membrane. Cell surface receptor that binds to the chondroitin sulfate moiety of glycosaminoglycan chains and promotes cell attachment. Promotes granulocyte chemotaxis, degranulation and adhesion. In macrophages, promotes the release of inflammatory cytokines, including IL8 and TNF. Signals probably through G-proteins. This chain is Adhesion G protein-coupled receptor E2 (ADGRE2), found in Macaca mulatta (Rhesus macaque).